We begin with the raw amino-acid sequence, 229 residues long: Cytochrome c oxidase subunit 2 (229 aa).

The Mitochondrial intermembrane segment spans residues 1-26 (MSTWANLGLQDSASPLMEQLIFFHDH). A helical transmembrane segment spans residues 27-48 (ALLILVMITVLVGYLMFMLFFN). The Mitochondrial matrix portion of the chain corresponds to 49–62 (SYVNRFLLHGQLIE). Residues 63–82 (MIWTILPAIILLFIAMPSLR) form a helical membrane-spanning segment. Topologically, residues 83–229 (LLYLLDEINE…IKWISSTVNS (147 aa)) are mitochondrial intermembrane. Cu cation contacts are provided by His161, Cys196, Glu198, Cys200, His204, and Met207. Mg(2+) is bound at residue Glu198.

Belongs to the cytochrome c oxidase subunit 2 family. In terms of assembly, component of the cytochrome c oxidase (complex IV, CIV), a multisubunit enzyme composed of a catalytic core of 3 subunits and several supernumerary subunits. The complex exists as a monomer or a dimer and forms supercomplexes (SCs) in the inner mitochondrial membrane with ubiquinol-cytochrome c oxidoreductase (cytochrome b-c1 complex, complex III, CIII). Cu cation serves as cofactor.

It localises to the mitochondrion inner membrane. The enzyme catalyses 4 Fe(II)-[cytochrome c] + O2 + 8 H(+)(in) = 4 Fe(III)-[cytochrome c] + 2 H2O + 4 H(+)(out). Functionally, component of the cytochrome c oxidase, the last enzyme in the mitochondrial electron transport chain which drives oxidative phosphorylation. The respiratory chain contains 3 multisubunit complexes succinate dehydrogenase (complex II, CII), ubiquinol-cytochrome c oxidoreductase (cytochrome b-c1 complex, complex III, CIII) and cytochrome c oxidase (complex IV, CIV), that cooperate to transfer electrons derived from NADH and succinate to molecular oxygen, creating an electrochemical gradient over the inner membrane that drives transmembrane transport and the ATP synthase. Cytochrome c oxidase is the component of the respiratory chain that catalyzes the reduction of oxygen to water. Electrons originating from reduced cytochrome c in the intermembrane space (IMS) are transferred via the dinuclear copper A center (CU(A)) of subunit 2 and heme A of subunit 1 to the active site in subunit 1, a binuclear center (BNC) formed by heme A3 and copper B (CU(B)). The BNC reduces molecular oxygen to 2 water molecules using 4 electrons from cytochrome c in the IMS and 4 protons from the mitochondrial matrix. This Drosophila lowei (Fruit fly) protein is Cytochrome c oxidase subunit 2 (mt:CoII).